Reading from the N-terminus, the 172-residue chain is 3-hydroxydecanoyl-[acyl-carrier-protein] dehydratase (172 aa).

H71 is a catalytic residue.

This sequence belongs to the thioester dehydratase family. FabA subfamily. In terms of assembly, homodimer.

The protein localises to the cytoplasm. The enzyme catalyses a (3R)-hydroxyacyl-[ACP] = a (2E)-enoyl-[ACP] + H2O. The catalysed reaction is (3R)-hydroxydecanoyl-[ACP] = (2E)-decenoyl-[ACP] + H2O. It carries out the reaction (2E)-decenoyl-[ACP] = (3Z)-decenoyl-[ACP]. Its pathway is lipid metabolism; fatty acid biosynthesis. Its function is as follows. Necessary for the introduction of cis unsaturation into fatty acids. Catalyzes the dehydration of (3R)-3-hydroxydecanoyl-ACP to E-(2)-decenoyl-ACP and then its isomerization to Z-(3)-decenoyl-ACP. Can catalyze the dehydratase reaction for beta-hydroxyacyl-ACPs with saturated chain lengths up to 16:0, being most active on intermediate chain length. This Escherichia coli O139:H28 (strain E24377A / ETEC) protein is 3-hydroxydecanoyl-[acyl-carrier-protein] dehydratase.